A 498-amino-acid polypeptide reads, in one-letter code: Putrescine N-hydroxylase (498 aa).

FAD-binding residues include Phe-23, Asp-43, Lys-45, Trp-50, His-51, and Gln-62. NADP(+) is bound by residues Gln-62 and Arg-104. Val-127 contacts FAD. Positions 207, 231, 275, and 309 each coordinate NADP(+). Asn-386, Pro-397, and Leu-399 together coordinate FAD. The segment covering Leu-443–Pro-474 has biased composition (polar residues). The disordered stretch occupies residues Leu-443–Gln-498.

This sequence belongs to the lysine N(6)-hydroxylase/L-ornithine N(5)-oxygenase family. FAD is required as a cofactor.

It carries out the reaction putrescine + NADPH + O2 = N-hydroxyputrescine + NADP(+) + H2O. Its pathway is siderophore biosynthesis. N-hydroxylating monooxygenase involved in the biosynthesis of the siderophore putrebactin. Catalyzes the N-hydroxylation of the aliphatic diamine putrescine into N-hydroxyputrescine (NHP). In Shewanella oneidensis (strain ATCC 700550 / JCM 31522 / CIP 106686 / LMG 19005 / NCIMB 14063 / MR-1), this protein is Putrescine N-hydroxylase.